We begin with the raw amino-acid sequence, 506 residues long: Lysine--tRNA ligase (506 aa).

Mg(2+) is bound by residues E416 and E423.

It belongs to the class-II aminoacyl-tRNA synthetase family. In terms of assembly, homodimer. The cofactor is Mg(2+).

It is found in the cytoplasm. It carries out the reaction tRNA(Lys) + L-lysine + ATP = L-lysyl-tRNA(Lys) + AMP + diphosphate. In Pelotomaculum thermopropionicum (strain DSM 13744 / JCM 10971 / SI), this protein is Lysine--tRNA ligase.